The following is a 574-amino-acid chain: Urease subunit alpha (574 aa).

In terms of domain architecture, Urease spans 131 to 574 (GAIDSHIHFI…LPMAQRYLLI (444 aa)). Ni(2+) contacts are provided by histidine 136, histidine 138, and lysine 219. Lysine 219 carries the N6-carboxylysine modification. Histidine 221 contacts substrate. Positions 248 and 274 each coordinate Ni(2+). The Proton donor role is filled by histidine 322. Aspartate 362 is a binding site for Ni(2+).

It belongs to the metallo-dependent hydrolases superfamily. Urease alpha subunit family. In terms of assembly, heterotrimer of UreA (gamma), UreB (beta) and UreC (alpha) subunits. Three heterotrimers associate to form the active enzyme. The cofactor is Ni cation. Carboxylation allows a single lysine to coordinate two nickel ions.

It localises to the cytoplasm. The enzyme catalyses urea + 2 H2O + H(+) = hydrogencarbonate + 2 NH4(+). It functions in the pathway nitrogen metabolism; urea degradation; CO(2) and NH(3) from urea (urease route): step 1/1. This is Urease subunit alpha from Prochlorococcus marinus (strain MIT 9303).